Here is a 201-residue protein sequence, read N- to C-terminus: Holliday junction branch migration complex subunit RuvA (201 aa).

The tract at residues 1–63 (MIGCLIGEVF…EDAQQLYGFI (63 aa)) is domain I. The domain II stretch occupies residues 64–142 (DAQEKLIFRT…ALSVQATTGS (79 aa)). The flexible linker stretch occupies residues 143 to 152 (TVTSAQIQFS). The segment at 152 to 201 (SSNSPIAEAEAALQSLGYKPIEAQKAIAAVKADYTEAADLIRAALKSMMK) is domain III.

The protein belongs to the RuvA family. As to quaternary structure, homotetramer. Forms an RuvA(8)-RuvB(12)-Holliday junction (HJ) complex. HJ DNA is sandwiched between 2 RuvA tetramers; dsDNA enters through RuvA and exits via RuvB. An RuvB hexamer assembles on each DNA strand where it exits the tetramer. Each RuvB hexamer is contacted by two RuvA subunits (via domain III) on 2 adjacent RuvB subunits; this complex drives branch migration. In the full resolvosome a probable DNA-RuvA(4)-RuvB(12)-RuvC(2) complex forms which resolves the HJ.

It localises to the cytoplasm. Its function is as follows. The RuvA-RuvB-RuvC complex processes Holliday junction (HJ) DNA during genetic recombination and DNA repair, while the RuvA-RuvB complex plays an important role in the rescue of blocked DNA replication forks via replication fork reversal (RFR). RuvA specifically binds to HJ cruciform DNA, conferring on it an open structure. The RuvB hexamer acts as an ATP-dependent pump, pulling dsDNA into and through the RuvAB complex. HJ branch migration allows RuvC to scan DNA until it finds its consensus sequence, where it cleaves and resolves the cruciform DNA. This is Holliday junction branch migration complex subunit RuvA from Acinetobacter baylyi (strain ATCC 33305 / BD413 / ADP1).